Here is a 494-residue protein sequence, read N- to C-terminus: DnaJ-related protein rsp1 (494 aa).

In terms of domain architecture, J spans 12–78 (DYYTILGAES…KLRELFDQRR (67 aa)). Polar residues predominate over residues 229-242 (SEISNGLNSNGVEN). Residues 229-354 (SEISNGLNSN…NDSTSNSTEY (126 aa)) form a disordered region. The span at 243 to 256 (SSITKSSPRSSSSS) shows a compositional bias: low complexity. Polar residues predominate over residues 270-287 (IFTSPNTPEHPSVYQTDI). Over residues 321–331 (LSRSKSSSLSR) the composition is skewed to low complexity. Positions 332–354 (NQTRSQLNDLSAENDSTSNSTEY) are enriched in polar residues.

As to quaternary structure, interacts iwth ssa1.

The protein localises to the cytoplasm. Its subcellular location is the cytoskeleton. It localises to the nucleus. Its function is as follows. Has a role in the proper organization of the interphase microtubule cytoskeleton. Required for equatorial microtubule organizing center (eMTOC) disassembly into satellites, contributing to the dynamic redistribution of MTOC components for organization of interphase microtubules. This is DnaJ-related protein rsp1 (rsp1) from Schizosaccharomyces pombe (strain 972 / ATCC 24843) (Fission yeast).